An 82-amino-acid polypeptide reads, in one-letter code: Immediate early response 3-interacting protein 1 (82 aa).

The next 2 membrane-spanning stretches (helical) occupy residues 2–22 and 62–82; these read AFTL…IAVL and VMRV…LLFG.

The protein belongs to the YOS1 family.

The protein localises to the endoplasmic reticulum membrane. Regulator of endoplasmic reticulum secretion that acts as a key determinant of brain size. Required for secretion of extracellular matrix proteins. Required for correct brain development by depositing sufficient extracellular matrix proteins for tissue integrity and the proliferation of neural progenitors. Acts as a regulator of the unfolded protein response (UPR). The chain is Immediate early response 3-interacting protein 1 from Mus musculus (Mouse).